A 74-amino-acid polypeptide reads, in one-letter code: Conotoxin SIIID (74 aa).

A signal peptide spans 1–20; sequence MMSKLGVLLTVCLLLFPLTA. The propeptide occupies 21 to 53; sequence LPLDGDQPADQLEDRMQDDISSEQYPSFVRRQK. 3 cysteine pairs are disulfide-bonded: cysteine 54-cysteine 71, cysteine 55-cysteine 73, and cysteine 61-cysteine 74.

Belongs to the conotoxin M superfamily. Post-translationally, three disulfide isomers have been synthesized and tested. SIIID with the disulfide pairing 1-4;2-5;3-6 is the most active. As to expression, expressed by the venom duct.

It is found in the secreted. Functionally, the short synthetic peptide SIIID (range 54-74, with disulfide pairing 1-4, 2-5 and 3-6) reversibly inhibits human alpha-7/CHRNA7 acetylcholine receptor (IC(50)=880 nM). Shows a paralytic effect in fish. The chain is Conotoxin SIIID from Conus striatus (Striated cone).